We begin with the raw amino-acid sequence, 276 residues long: Glutamate 5-kinase (276 aa).

Residue K14 participates in ATP binding. 3 residues coordinate substrate: S54, D141, and N157. Residues 177–178 (SD) and 219–225 (TGGMLTK) each bind ATP.

It belongs to the glutamate 5-kinase family.

It is found in the cytoplasm. The catalysed reaction is L-glutamate + ATP = L-glutamyl 5-phosphate + ADP. Its pathway is amino-acid biosynthesis; L-proline biosynthesis; L-glutamate 5-semialdehyde from L-glutamate: step 1/2. Catalyzes the transfer of a phosphate group to glutamate to form L-glutamate 5-phosphate. This chain is Glutamate 5-kinase, found in Listeria monocytogenes serovar 1/2a (strain ATCC BAA-679 / EGD-e).